Reading from the N-terminus, the 741-residue chain is Phosphoribosylformylglycinamidine synthase subunit PurL (741 aa).

Histidine 54 is an active-site residue. ATP-binding residues include tyrosine 57 and lysine 98. Mg(2+) is bound at residue glutamate 100. Residues 101 to 104 (SHNH) and arginine 123 each bind substrate. The active-site Proton acceptor is the histidine 102. Mg(2+) is bound at residue aspartate 124. A substrate-binding site is contributed by glutamine 251. A Mg(2+)-binding site is contributed by aspartate 279. A substrate-binding site is contributed by 323-325 (ESQ). Aspartate 510 and glycine 547 together coordinate ATP. Asparagine 548 is a binding site for Mg(2+). Residue serine 550 participates in substrate binding.

The protein belongs to the FGAMS family. Monomer. Part of the FGAM synthase complex composed of 1 PurL, 1 PurQ and 2 PurS subunits.

Its subcellular location is the cytoplasm. It catalyses the reaction N(2)-formyl-N(1)-(5-phospho-beta-D-ribosyl)glycinamide + L-glutamine + ATP + H2O = 2-formamido-N(1)-(5-O-phospho-beta-D-ribosyl)acetamidine + L-glutamate + ADP + phosphate + H(+). It participates in purine metabolism; IMP biosynthesis via de novo pathway; 5-amino-1-(5-phospho-D-ribosyl)imidazole from N(2)-formyl-N(1)-(5-phospho-D-ribosyl)glycinamide: step 1/2. Functionally, part of the phosphoribosylformylglycinamidine synthase complex involved in the purines biosynthetic pathway. Catalyzes the ATP-dependent conversion of formylglycinamide ribonucleotide (FGAR) and glutamine to yield formylglycinamidine ribonucleotide (FGAM) and glutamate. The FGAM synthase complex is composed of three subunits. PurQ produces an ammonia molecule by converting glutamine to glutamate. PurL transfers the ammonia molecule to FGAR to form FGAM in an ATP-dependent manner. PurS interacts with PurQ and PurL and is thought to assist in the transfer of the ammonia molecule from PurQ to PurL. This is Phosphoribosylformylglycinamidine synthase subunit PurL from Picrophilus torridus (strain ATCC 700027 / DSM 9790 / JCM 10055 / NBRC 100828 / KAW 2/3).